We begin with the raw amino-acid sequence, 69 residues long: Bacteriocin microcin B17 (69 aa).

Positions 1–26 (MELKASEFGVVLSVDALKLSRQSPLG) are excised as a propeptide. The oxazole-4-carboxylic acid (Gly-Ser) cross-link spans 39-40 (GS). The segment at residues 40–41 (SC) is a cross-link (thiazole-4-carboxylic acid (Ser-Cys)). 3 consecutive cross-links (thiazole-4-carboxylic acid (Gly-Cys)) follow at residues 47–48 (GC), 50–51 (GC), and 54–55 (GC). Residues 55-56 (CS) constitute a cross-link (oxazole-4-carboxylic acid (Cys-Ser)). Cross-links (oxazole-4-carboxylic acid (Gly-Ser)) lie at residues 61-62 (GS) and 64-65 (GS).

In terms of processing, the processed N-terminus does not resemble a typical secretion signal sequence. Maturation of thiazole and oxazole containing antibiotics involves the enzymatic condensation of a Cys, Ser or Thr with the alpha-carbonyl of the preceding amino acid to form a thioether or ether bond, then dehydration to form a double bond with the alpha-amino nitrogen. Thiazoline or oxazoline rings are dehydrogenated to form thiazole or oxazole rings.

Its function is as follows. This glycine-rich peptide antibiotic inhibits DNA replication in many enteric bacteria, that leads to induction of the SOS repair system, massive DNA degradation and cell death. B17 inhibits type II topoisomerase by trapping an enzyme - DNA cleavable complex. The polypeptide is Bacteriocin microcin B17 (mcbA) (Escherichia coli).